Consider the following 438-residue polypeptide: LIM domain-containing protein C4F6.12 (438 aa).

2 disordered regions span residues 1–37 (MHSP…NNLV) and 49–78 (TGGR…TIKQ). The segment covering 24 to 37 (SPVSTNGSPLNNLV) has biased composition (polar residues). 2 positions are modified to phosphoserine: serine 67 and serine 96. 3 consecutive LIM zinc-binding domains span residues 256–316 (KSCH…QFSP), 318–375 (CKHC…NKYA), and 376–435 (VKCK…SVKF).

In Schizosaccharomyces pombe (strain 972 / ATCC 24843) (Fission yeast), this protein is LIM domain-containing protein C4F6.12.